The sequence spans 415 residues: Beta-1,4-glucuronyltransferase 1 (415 aa).

Residues 1–8 are Cytoplasmic-facing; it reads MQMSYAIR. A helical; Signal-anchor for type II membrane protein transmembrane segment spans residues 9–36; the sequence is CAFYQLLLAALMLVAMLQLLYLSLLSGL. The Lumenal segment spans residues 37–415; the sequence is HGQEEQEQYF…ARYPNSPHRC (379 aa). The N-linked (GlcNAc...) asparagine glycan is linked to N204. Residues D227 and D229 each coordinate Mn(2+). N300 carries N-linked (GlcNAc...) asparagine glycosylation.

Belongs to the glycosyltransferase 49 family. As to quaternary structure, interacts with LARGE1 and LARGE2. Requires Mn(2+) as cofactor.

The protein localises to the golgi apparatus membrane. It carries out the reaction 3-O-[beta-D-Xyl-(1-&gt;4)-Rib-ol-P-Rib-ol-P-3-beta-D-GalNAc-(1-&gt;3)-beta-D-GlcNAc-(1-&gt;4)-(O-6-P-alpha-D-Man)]-Thr-[protein] + UDP-alpha-D-glucuronate = 3-O-[beta-D-GlcA-(1-&gt;3)-beta-D-Xyl-(1-&gt;4)-Rib-ol-P-Rib-ol-P-3-beta-D-GalNAc-(1-&gt;3)-beta-D-GlcNAc-(1-&gt;4)-(O-6-P-alpha-D-Man)]-Thr-[protein] + UDP + H(+). Its pathway is protein modification; protein glycosylation. In terms of biological role, beta-1,4-glucuronyltransferase involved in O-mannosylation of alpha-dystroglycan (DAG1). Transfers a glucuronic acid (GlcA) residue onto a xylose (Xyl) acceptor to produce the glucuronyl-beta-1,4-xylose-beta disaccharide primer, which is further elongated by LARGE1, during synthesis of phosphorylated O-mannosyl glycan. Phosphorylated O-mannosyl glycan is a carbohydrate structure present in alpha-dystroglycan (DAG1), which is required for binding laminin G-like domain-containing extracellular proteins with high affinity. Required for axon guidance; via its function in O-mannosylation of alpha-dystroglycan (DAG1). The sequence is that of Beta-1,4-glucuronyltransferase 1 from Mus musculus (Mouse).